Here is a 380-residue protein sequence, read N- to C-terminus: Cytochrome b (380 aa).

4 helical membrane passes run F34 to M54, W78 to I99, W114 to L134, and F179 to M199. Residues H84 and H98 each coordinate heme b. Heme b is bound by residues H183 and H197. A ubiquinone is bound at residue H202. Helical transmembrane passes span L227–S247, L289–H309, L321–S341, and F348–P368.

It belongs to the cytochrome b family. In terms of assembly, the cytochrome bc1 complex contains 11 subunits: 3 respiratory subunits (MT-CYB, CYC1 and UQCRFS1), 2 core proteins (UQCRC1 and UQCRC2) and 6 low-molecular weight proteins (UQCRH/QCR6, UQCRB/QCR7, UQCRQ/QCR8, UQCR10/QCR9, UQCR11/QCR10 and a cleavage product of UQCRFS1). This cytochrome bc1 complex then forms a dimer. It depends on heme b as a cofactor.

It localises to the mitochondrion inner membrane. Its function is as follows. Component of the ubiquinol-cytochrome c reductase complex (complex III or cytochrome b-c1 complex) that is part of the mitochondrial respiratory chain. The b-c1 complex mediates electron transfer from ubiquinol to cytochrome c. Contributes to the generation of a proton gradient across the mitochondrial membrane that is then used for ATP synthesis. The sequence is that of Cytochrome b (MT-CYB) from Tragopan satyra (Satyr tragopan).